A 347-amino-acid polypeptide reads, in one-letter code: Phenylalanine--tRNA ligase alpha subunit (347 aa).

Glu-265 contributes to the Mg(2+) binding site.

It belongs to the class-II aminoacyl-tRNA synthetase family. Phe-tRNA synthetase alpha subunit type 1 subfamily. Tetramer of two alpha and two beta subunits. It depends on Mg(2+) as a cofactor.

The protein resides in the cytoplasm. It catalyses the reaction tRNA(Phe) + L-phenylalanine + ATP = L-phenylalanyl-tRNA(Phe) + AMP + diphosphate + H(+). The polypeptide is Phenylalanine--tRNA ligase alpha subunit (Wolbachia sp. subsp. Brugia malayi (strain TRS)).